Here is a 608-residue protein sequence, read N- to C-terminus: Aspartate--tRNA(Asp/Asn) ligase (608 aa).

Residue Glu-175 coordinates L-aspartate. Residues 199–202 (QLFK) are aspartate. Residue Arg-221 participates in L-aspartate binding. Residues 221 to 223 (RDE) and Gln-230 each bind ATP. His-453 lines the L-aspartate pocket. Glu-487 lines the ATP pocket. Arg-494 serves as a coordination point for L-aspartate. Residue 539-542 (GWDR) participates in ATP binding. A disordered region spans residues 566 to 608 (IDPLTDAPAAITPQQRKEAGIDAKPKPKAEAQAEAQAEESAEK). A compositionally biased stretch (basic and acidic residues) spans 580-596 (QRKEAGIDAKPKPKAEA).

Belongs to the class-II aminoacyl-tRNA synthetase family. Type 1 subfamily. In terms of assembly, homodimer.

Its subcellular location is the cytoplasm. The catalysed reaction is tRNA(Asx) + L-aspartate + ATP = L-aspartyl-tRNA(Asx) + AMP + diphosphate. Functionally, aspartyl-tRNA synthetase with relaxed tRNA specificity since it is able to aspartylate not only its cognate tRNA(Asp) but also tRNA(Asn). Reaction proceeds in two steps: L-aspartate is first activated by ATP to form Asp-AMP and then transferred to the acceptor end of tRNA(Asp/Asn). This chain is Aspartate--tRNA(Asp/Asn) ligase, found in Corynebacterium glutamicum (strain R).